Here is a 308-residue protein sequence, read N- to C-terminus: GTP cyclohydrolase FolE2 (308 aa).

It belongs to the GTP cyclohydrolase IV family.

It carries out the reaction GTP + H2O = 7,8-dihydroneopterin 3'-triphosphate + formate + H(+). The protein operates within cofactor biosynthesis; 7,8-dihydroneopterin triphosphate biosynthesis; 7,8-dihydroneopterin triphosphate from GTP: step 1/1. In terms of biological role, converts GTP to 7,8-dihydroneopterin triphosphate. In Colwellia psychrerythraea (strain 34H / ATCC BAA-681) (Vibrio psychroerythus), this protein is GTP cyclohydrolase FolE2.